The primary structure comprises 792 residues: Homeobox protein HAZ1 (792 aa).

The tract at residues 1–154 (MDKTTTSDLV…RPPKGGTPKD (154 aa)) is disordered. Polar residues predominate over residues 15-36 (NIGSNAGSAQEPLTTNGKTSGV). A compositionally biased stretch (basic residues) spans 38–49 (NRYKQTVKRGRK). Positions 51–67 (SQISPSKTYPLRSSHSN) are enriched in polar residues. The segment covering 95–104 (VAKKRKRSKP) has biased composition (basic residues). The segment covering 116–127 (TSEKKNKAHNEL) has biased composition (basic and acidic residues). Residues 244–301 (DIFCAACGSKDVTLKNDIILCDGICDRGFHQYCLNPPLLAEDIPQGDEGWLCPACDCK) form a PHD-type zinc finger. Disordered stretches follow at residues 338-495 (QIDA…NSNL) and 529-599 (YGKA…SDQQ). Over residues 345–354 (PSDDSADNDY) the composition is skewed to acidic residues. The segment covering 362-371 (HKVDEEKSSG) has biased composition (basic and acidic residues). Acidic residues-rich tracts occupy residues 373–389 (DGGEGLDSDDSSSEDSE) and 433–453 (DESNSDQSDESDFTSDSDDFC). Residues 610–669 (STAKNRHFGPAINQKLKAHFKEDPYPSRATKENLAQELGLTFNQVTKWFSSTRHYARVAA) constitute a DNA-binding region (homeobox). 2 disordered regions span residues 677–697 (ENHTAENNNNTNTVDSIQLRG) and 711–792 (SEER…KTGR). Composition is skewed to polar residues over residues 716-737 (GQSNLNEGTPLRSDTSCGQSVA) and 746-760 (NQGNDSSSNVRTPNA). Residues 774–792 (DEARRKAVQRELRKMKTGR) are compositionally biased toward basic and acidic residues.

This sequence belongs to the PHD-associated homeobox family. As to expression, expressed in roots, leaves, stems, panicle and seeds.

The protein localises to the nucleus. Its function is as follows. Transcriptional repressor involved in the regulation of gibberrelin (GA) signaling. Binds to the 5'-GATC-3' motif of HD16/EL1 promoter. Functions as a positive regulator of GA signaling by suppressing the expression of HD16/EL1, a negative regulator of GA signaling. In Oryza sativa subsp. japonica (Rice), this protein is Homeobox protein HAZ1.